The following is a 472-amino-acid chain: Trigger factor (472 aa).

One can recognise a PPIase FKBP-type domain in the interval 174 to 261 (GDIAVLGFKG…LKDLKTRELP (88 aa)). Positions 430–472 (ENSTLTEQAPAADDADDAEKPAAKKKPAAKKKTPAKSKTDAEA) are disordered. Positions 452-464 (AKKKPAAKKKTPA) are enriched in basic residues.

It belongs to the FKBP-type PPIase family. Tig subfamily.

The protein resides in the cytoplasm. The catalysed reaction is [protein]-peptidylproline (omega=180) = [protein]-peptidylproline (omega=0). Functionally, involved in protein export. Acts as a chaperone by maintaining the newly synthesized protein in an open conformation. Functions as a peptidyl-prolyl cis-trans isomerase. This chain is Trigger factor, found in Parasynechococcus marenigrum (strain WH8102).